Reading from the N-terminus, the 122-residue chain is Large ribosomal subunit protein uL14 (122 aa).

The protein belongs to the universal ribosomal protein uL14 family. Part of the 50S ribosomal subunit. Forms a cluster with proteins L3 and L19. In the 70S ribosome, L14 and L19 interact and together make contacts with the 16S rRNA in bridges B5 and B8.

Binds to 23S rRNA. Forms part of two intersubunit bridges in the 70S ribosome. In Symbiobacterium thermophilum (strain DSM 24528 / JCM 14929 / IAM 14863 / T), this protein is Large ribosomal subunit protein uL14.